The chain runs to 161 residues: pEARLI1-like lipid transfer protein 1 (161 aa).

The N-terminal stretch at 1–25 is a signal peptide; sequence MASKNSASLALFFALNILFFTLTVA. An A-1 repeat occupies 32 to 39; sequence PSPKPKPV. Residues 32-76 are disordered; that stretch reads PSPKPKPVPSPKPKPVQCPPPPRPSVPSPNPRPVTPPRTPGSSGN. Residues 33-70 show a composition bias toward pro residues; it reads SPKPKPVPSPKPKPVQCPPPPRPSVPSPNPRPVTPPRT. The 2 X 8 AA tandem repeats A of P-S-P-K-P-K-P-V stretch occupies residues 34–49; sequence PKPKPVPSPKPKPVQC. Residues 40 to 47 form an A-2 repeat; it reads PSPKPKPV.

The protein belongs to the plant LTP family. PEARLI1 subfamily. In terms of assembly, self-interacts and binds to DIR1. Interacts with PDLP1.

Its subcellular location is the secreted. The protein resides in the cell wall. The protein localises to the endoplasmic reticulum. It localises to the cell junction. It is found in the plasmodesma. Its subcellular location is the plastid. The protein resides in the chloroplast. Its function is as follows. Probable lipid transfer protein (LTP). Seems to control the flowering process and lignin synthesis. Together with DIR1, required for glycerol-3-phosphate- (G3P) and azelaic acid- (AA) induced systemic acquired resistance (SAR). Component of plant systemic immunity involved in priming defenses in a AA-dependent manner, by modulating production and/or translocation of a mobile signal(s) during SAR. Confers resistance to Botrytis cinerea and Pseudomonas syringae pv. tomato DC3000 and PmaDG3. May be involved in induced systemic resistance (ISR) mediated by non-pathogenic bacteria (e.g. P. fluorescens GM30). Prevents electrolyte leakage during freezing damage. This is pEARLI1-like lipid transfer protein 1 (AZI1) from Arabidopsis thaliana (Mouse-ear cress).